A 261-amino-acid chain; its full sequence is UPF0246 protein Vapar_1301 (261 aa).

This sequence belongs to the UPF0246 family.

This chain is UPF0246 protein Vapar_1301, found in Variovorax paradoxus (strain S110).